The following is a 440-amino-acid chain: Thymidine phosphorylase (440 aa).

This sequence belongs to the thymidine/pyrimidine-nucleoside phosphorylase family. In terms of assembly, homodimer.

The catalysed reaction is thymidine + phosphate = 2-deoxy-alpha-D-ribose 1-phosphate + thymine. Its pathway is pyrimidine metabolism; dTMP biosynthesis via salvage pathway; dTMP from thymine: step 1/2. In terms of biological role, the enzymes which catalyze the reversible phosphorolysis of pyrimidine nucleosides are involved in the degradation of these compounds and in their utilization as carbon and energy sources, or in the rescue of pyrimidine bases for nucleotide synthesis. In Yersinia enterocolitica serotype O:8 / biotype 1B (strain NCTC 13174 / 8081), this protein is Thymidine phosphorylase.